We begin with the raw amino-acid sequence, 135 residues long: ATP synthase epsilon chain (135 aa).

It belongs to the ATPase epsilon chain family. In terms of assembly, F-type ATPases have 2 components, CF(1) - the catalytic core - and CF(0) - the membrane proton channel. CF(1) has five subunits: alpha(3), beta(3), gamma(1), delta(1), epsilon(1). CF(0) has three main subunits: a, b and c.

The protein resides in the cell inner membrane. Its function is as follows. Produces ATP from ADP in the presence of a proton gradient across the membrane. The polypeptide is ATP synthase epsilon chain (Brucella suis (strain ATCC 23445 / NCTC 10510)).